Consider the following 78-residue polypeptide: MSQNNTISSMNPERAYNNVTLKNLTAFQLLSQRENICELLNLVESTERHNSIINPERQRMSLEEMKKMLDALKNERKK.

N-acetylserine is present on S2.

As to quaternary structure, interacts directly with RSC8. Component of the two forms of the RSC complex composed of at least either RSC1 or RSC2, and ARP7, ARP9, LDB7, NPL6, RSC3, RSC30, RSC4, RSC58, RSC6, RSC8, RSC9, SFH1, STH1, HTL1 and probably RTT102. The complexes interact with histone and histone variant components of centromeric chromatin. Component of a fungal-specific module (HTL1-LDB7-NPL6-RSC3-RSC30) within the RSC complex.

The protein resides in the nucleus. Required for cell cycle progression through G2/M transition at temperatures higher than 33 degrees Celsius. Component of the chromatin structure-remodeling complex (RSC), which is involved in transcription regulation and nucleosome positioning. RSC is responsible for the transfer of a histone octamer from a nucleosome core particle to naked DNA. The reaction requires ATP and involves an activated RSC-nucleosome intermediate. Remodeling reaction also involves DNA translocation, DNA twist and conformational change. As a reconfigurer of centromeric and flanking nucleosomes, RSC complex is required both for proper kinetochore function in chromosome segregation and, via a PKC1-dependent signaling pathway, for organization of the cellular cytoskeleton. When associated with the RSC complex, may act coordinately with PKC1 to regulate G2/M transition. Together with LDB7, NPL6, RSC3, RSC30 components, defines a fungal-specific module within the RSC complex that plays a role in many cellular functions including the maintenance of cell wall integrity. The chain is High temperature lethal protein 1 (HTL1) from Saccharomyces cerevisiae (strain ATCC 204508 / S288c) (Baker's yeast).